We begin with the raw amino-acid sequence, 164 residues long: MIHDKTCPCGSQKIYQDCCQILHLGLDSGAQLATCPEQLMRSRYCAFVLKNFDYIIKTHHADFLEGLTLEQLQQGPHPEWLGLDVLSADDTTQSDGSKGGTVTFKAWYKMNGEIDAIYERSEFIFEQSRWFYTQGHQMHAKLPGRNDPCVCHSGKKFKQCCMKG.

This sequence belongs to the UPF0225 family.

This chain is UPF0225 protein Shewmr7_1921, found in Shewanella sp. (strain MR-7).